The sequence spans 380 residues: Cytochrome b (380 aa).

The next 4 membrane-spanning stretches (helical) occupy residues 34-54 (FGSL…LLAA), 78-99 (WLIR…YLHI), 114-134 (WNIG…GYVL), and 179-199 (FFAL…VHLT). Residues histidine 84 and histidine 98 each coordinate heme b. Residues histidine 183 and histidine 197 each contribute to the heme b site. Histidine 202 is an a ubiquinone binding site. The next 4 membrane-spanning stretches (helical) occupy residues 227–247 (IKDI…ALFS), 289–309 (LGGV…PLLH), 321–341 (LSQI…WVGS), and 348–368 (FIII…VLFP).

It belongs to the cytochrome b family. The cytochrome bc1 complex contains 11 subunits: 3 respiratory subunits (MT-CYB, CYC1 and UQCRFS1), 2 core proteins (UQCRC1 and UQCRC2) and 6 low-molecular weight proteins (UQCRH/QCR6, UQCRB/QCR7, UQCRQ/QCR8, UQCR10/QCR9, UQCR11/QCR10 and a cleavage product of UQCRFS1). This cytochrome bc1 complex then forms a dimer. Heme b serves as cofactor.

The protein localises to the mitochondrion inner membrane. Component of the ubiquinol-cytochrome c reductase complex (complex III or cytochrome b-c1 complex) that is part of the mitochondrial respiratory chain. The b-c1 complex mediates electron transfer from ubiquinol to cytochrome c. Contributes to the generation of a proton gradient across the mitochondrial membrane that is then used for ATP synthesis. The polypeptide is Cytochrome b (MT-CYB) (Paradisaea rubra (Red bird of paradise)).